A 226-amino-acid chain; its full sequence is PKHD-type hydroxylase PP_0862 (226 aa).

One can recognise a Fe2OG dioxygenase domain in the interval 78 to 178; sequence KVFPPLINCY…RYAAFFWTQS (101 aa). His-96, Asp-98, and His-159 together coordinate Fe cation. Arg-169 lines the 2-oxoglutarate pocket.

The cofactor is Fe(2+). L-ascorbate is required as a cofactor.

In Pseudomonas putida (strain ATCC 47054 / DSM 6125 / CFBP 8728 / NCIMB 11950 / KT2440), this protein is PKHD-type hydroxylase PP_0862.